Consider the following 371-residue polypeptide: Maltose/maltodextrin import ATP-binding protein MalK (371 aa).

Positions 4–234 (VQLQNVTKAW…PADRFVAGFI (231 aa)) constitute an ABC transporter domain. An ATP-binding site is contributed by 36–43 (GPSGCGKS).

Belongs to the ABC transporter superfamily. Maltooligosaccharide importer (TC 3.A.1.1.1) family. The complex is composed of two ATP-binding proteins (MalK), two transmembrane proteins (MalG and MalK) and a solute-binding protein (MalE).

Its subcellular location is the cell inner membrane. It catalyses the reaction D-maltose(out) + ATP + H2O = D-maltose(in) + ADP + phosphate + H(+). Its function is as follows. Part of the ABC transporter complex MalEFGK involved in maltose/maltodextrin import. Responsible for energy coupling to the transport system. The sequence is that of Maltose/maltodextrin import ATP-binding protein MalK from Escherichia coli O157:H7.